A 260-amino-acid polypeptide reads, in one-letter code: Snake venom serine protease homolog 2 (260 aa).

Residues 1–18 (MVLIRVLANLLVLQLSYA) form the signal peptide. A propeptide spanning residues 19–24 (QKSSEL) is cleaved from the precursor. In terms of domain architecture, Peptidase S1 spans 25 to 251 (VIGGDECNIN…YTDWIQSIIA (227 aa)). Disulfide bonds link Cys31/Cys165, Cys52/Cys68, Cys100/Cys258, Cys144/Cys212, Cys176/Cys191, and Cys202/Cys227. Asn123 carries N-linked (GlcNAc...) asparagine glycosylation. Asn253 carries N-linked (GlcNAc...) asparagine glycosylation.

The protein belongs to the peptidase S1 family. Snake venom subfamily. In terms of tissue distribution, expressed by the venom gland.

It is found in the secreted. Its function is as follows. Snake venom serine protease homolog that may act in the hemostasis system of the prey. This chain is Snake venom serine protease homolog 2, found in Macrovipera lebetinus (Levantine viper).